The following is a 227-amino-acid chain: Probable septum site-determining protein MinC (227 aa).

This sequence belongs to the MinC family. In terms of assembly, interacts with MinD and FtsZ.

Functionally, cell division inhibitor that blocks the formation of polar Z ring septums. Rapidly oscillates between the poles of the cell to destabilize FtsZ filaments that have formed before they mature into polar Z rings. Prevents FtsZ polymerization. The polypeptide is Probable septum site-determining protein MinC (Laribacter hongkongensis (strain HLHK9)).